We begin with the raw amino-acid sequence, 277 residues long: Ubiquitin-conjugating enzyme suppressor 1 (277 aa).

Positions 254 to 277 (RTLACPDETNDNRGSEHYTKRKKI) are disordered.

Functionally, not known; its elevated expression suppresses the conditional cell cycle defects associated with UBC3/CDC34 mutations. This is Ubiquitin-conjugating enzyme suppressor 1 (UBS1) from Saccharomyces cerevisiae (strain ATCC 204508 / S288c) (Baker's yeast).